The chain runs to 458 residues: Bone morphogenetic protein 3 (458 aa).

Positions 1–23 (MAECRPWLVLWVGCCGCLCLALG) are cleaved as a signal peptide. Residues 24 to 348 (ELLNDGLLAV…EQTLKKARRK (325 aa)) constitute a propeptide that is removed on maturation. The N-linked (GlcNAc...) asparagine glycan is linked to Asn107. Disordered regions lie at residues 244–275 (DSVV…KKRS) and 303–335 (ERKP…SQTL). A compositionally biased stretch (basic residues) spans 320–329 (NKKKLRKGSR). Cystine bridges form between Cys356–Cys423, Cys385–Cys455, and Cys389–Cys457. An N-linked (GlcNAc...) asparagine glycan is attached at Asn449.

Belongs to the TGF-beta family. Homodimer. Can form heterodimers with ADMP, BMP-2-I and/or BMP-2-II, and DERRIERE.

It is found in the secreted. Functionally, dorsalizing factor. Antagonizes mesoderm formation by ventralizing BMPs. This chain is Bone morphogenetic protein 3 (bmp3), found in Xenopus laevis (African clawed frog).